The primary structure comprises 479 residues: Aspartyl/glutamyl-tRNA(Asn/Gln) amidotransferase subunit B (479 aa).

The protein belongs to the GatB/GatE family. GatB subfamily. In terms of assembly, heterotrimer of A, B and C subunits.

It catalyses the reaction L-glutamyl-tRNA(Gln) + L-glutamine + ATP + H2O = L-glutaminyl-tRNA(Gln) + L-glutamate + ADP + phosphate + H(+). The enzyme catalyses L-aspartyl-tRNA(Asn) + L-glutamine + ATP + H2O = L-asparaginyl-tRNA(Asn) + L-glutamate + ADP + phosphate + 2 H(+). Its function is as follows. Allows the formation of correctly charged Asn-tRNA(Asn) or Gln-tRNA(Gln) through the transamidation of misacylated Asp-tRNA(Asn) or Glu-tRNA(Gln) in organisms which lack either or both of asparaginyl-tRNA or glutaminyl-tRNA synthetases. The reaction takes place in the presence of glutamine and ATP through an activated phospho-Asp-tRNA(Asn) or phospho-Glu-tRNA(Gln). The protein is Aspartyl/glutamyl-tRNA(Asn/Gln) amidotransferase subunit B of Alcanivorax borkumensis (strain ATCC 700651 / DSM 11573 / NCIMB 13689 / SK2).